A 464-amino-acid polypeptide reads, in one-letter code: Argininosuccinate lyase (464 aa).

It belongs to the lyase 1 family. Argininosuccinate lyase subfamily.

The protein localises to the cytoplasm. It carries out the reaction 2-(N(omega)-L-arginino)succinate = fumarate + L-arginine. The protein operates within amino-acid biosynthesis; L-arginine biosynthesis; L-arginine from L-ornithine and carbamoyl phosphate: step 3/3. This Pseudomonas fluorescens (strain ATCC BAA-477 / NRRL B-23932 / Pf-5) protein is Argininosuccinate lyase.